Reading from the N-terminus, the 72-residue chain is MSVKKKLLAELRQKSLVELDAFIHENKKALFSLRAEAALQNKAVKTHLFSMYKKTIARSMTVKQEKEGKVDG.

Belongs to the universal ribosomal protein uL29 family.

The polypeptide is Large ribosomal subunit protein uL29 (Chlamydia abortus (strain DSM 27085 / S26/3) (Chlamydophila abortus)).